The following is a 350-amino-acid chain: Inhibitor of nuclear factor kappa-B kinase-interacting protein (350 aa).

Residues 1-11 (MSEVKSRKKSG) show a composition bias toward basic residues. The tract at residues 1–39 (MSEVKSRKKSGPKGAPAAEPGKRSEGGKTPVARSSGGGG) is disordered. A helical membrane pass occupies residues 46 to 62 (CLSLLSLGTCLGLAWFV). N-linked (GlcNAc...) asparagine glycosylation occurs at Asn144. Residues 184–217 (GLVTDVISLTDSVQELENKIEKVEKNTVKNIGDL) adopt a coiled-coil conformation. The N-linked (GlcNAc...) asparagine glycan is linked to Asn328.

In terms of processing, N-glycosylated. Isoform 4 is glycosylated at Asn-154. In terms of tissue distribution, expressed in vein endothelial cells. Isoform 4 is expressed in lung, kidney, spleen, thymus and skeletal muscle.

The protein resides in the endoplasmic reticulum membrane. Functionally, target of p53/TP53 with pro-apoptotic function. The sequence is that of Inhibitor of nuclear factor kappa-B kinase-interacting protein (IKBIP) from Homo sapiens (Human).